Reading from the N-terminus, the 266-residue chain is Putative carbamate hydrolase RutD (266 aa).

Belongs to the AB hydrolase superfamily. Hydrolase RutD family.

The enzyme catalyses carbamate + 2 H(+) = NH4(+) + CO2. Functionally, involved in pyrimidine catabolism. May facilitate the hydrolysis of carbamate, a reaction that can also occur spontaneously. This chain is Putative carbamate hydrolase RutD, found in Escherichia coli O45:K1 (strain S88 / ExPEC).